A 224-amino-acid polypeptide reads, in one-letter code: Mammalian ependymin-related protein 1 (224 aa).

Positions 1 to 37 are cleaved as a signal peptide; that stretch reads MLTRAPRRLVQGPRETWLLGGLWVWILCGLGMAGSPG. 3 disulfide bridges follow: Cys-42-Cys-172, Cys-88-Cys-222, and Cys-113-Cys-210. Asn-130 and Asn-182 each carry an N-linked (GlcNAc...) asparagine glycan.

This sequence belongs to the ependymin family. In terms of assembly, homodimer. N-glycosylated; the glycan contains mannose-6-phosphate moieties. As to expression, detected in brain (at protein level).

It is found in the lysosome lumen. Its subcellular location is the secreted. Binds anionic lipids and gangliosides at acidic pH. This chain is Mammalian ependymin-related protein 1 (Epdr1), found in Rattus norvegicus (Rat).